The primary structure comprises 450 residues: Phosphoglucosamine mutase (450 aa).

The active-site Phosphoserine intermediate is serine 101. 4 residues coordinate Mg(2+): serine 101, aspartate 242, aspartate 244, and aspartate 246. Serine 101 is subject to Phosphoserine.

This sequence belongs to the phosphohexose mutase family. Mg(2+) serves as cofactor. In terms of processing, activated by phosphorylation.

It carries out the reaction alpha-D-glucosamine 1-phosphate = D-glucosamine 6-phosphate. In terms of biological role, catalyzes the conversion of glucosamine-6-phosphate to glucosamine-1-phosphate. The polypeptide is Phosphoglucosamine mutase (Rhodopseudomonas palustris (strain BisB5)).